Consider the following 818-residue polypeptide: Phenylalanine--tRNA ligase beta subunit (818 aa).

In terms of domain architecture, tRNA-binding spans 39–148 (AAELQKFEVA…EDAVVGENFT (110 aa)). In terms of domain architecture, B5 spans 423–498 (SQKKPLDFSA…RIYGYDKIES (76 aa)). Residues aspartate 476, aspartate 482, glutamate 485, and glutamate 486 each coordinate Mg(2+). The region spanning 724–817 (SDFQANFRDY…ISQKFQGTLR (94 aa)) is the FDX-ACB domain.

It belongs to the phenylalanyl-tRNA synthetase beta subunit family. Type 1 subfamily. As to quaternary structure, tetramer of two alpha and two beta subunits. Requires Mg(2+) as cofactor.

The protein resides in the cytoplasm. The enzyme catalyses tRNA(Phe) + L-phenylalanine + ATP = L-phenylalanyl-tRNA(Phe) + AMP + diphosphate + H(+). This Rickettsia conorii (strain ATCC VR-613 / Malish 7) protein is Phenylalanine--tRNA ligase beta subunit.